Reading from the N-terminus, the 397-residue chain is S-adenosylmethionine synthase (397 aa).

Residue H16 participates in ATP binding. D18 is a Mg(2+) binding site. E44 is a binding site for K(+). 2 residues coordinate L-methionine: E57 and Q100. The tract at residues 100–110 (QSPDIAQGVDN) is flexible loop. ATP-binding positions include 175–177 (DGK), 242–243 (RF), D251, 257–258 (RK), A274, and K278. An L-methionine-binding site is contributed by D251. Position 282 (K282) interacts with L-methionine.

Belongs to the AdoMet synthase family. As to quaternary structure, homotetramer; dimer of dimers. Mg(2+) is required as a cofactor. K(+) serves as cofactor.

It localises to the cytoplasm. It carries out the reaction L-methionine + ATP + H2O = S-adenosyl-L-methionine + phosphate + diphosphate. Its pathway is amino-acid biosynthesis; S-adenosyl-L-methionine biosynthesis; S-adenosyl-L-methionine from L-methionine: step 1/1. Catalyzes the formation of S-adenosylmethionine (AdoMet) from methionine and ATP. The overall synthetic reaction is composed of two sequential steps, AdoMet formation and the subsequent tripolyphosphate hydrolysis which occurs prior to release of AdoMet from the enzyme. This Leifsonia xyli subsp. xyli (strain CTCB07) protein is S-adenosylmethionine synthase.